Here is a 680-residue protein sequence, read N- to C-terminus: Dipeptidyl carboxypeptidase (680 aa).

His469 serves as a coordination point for Zn(2+). Residue Glu470 is part of the active site. Residues His473 and His476 each coordinate Zn(2+).

It belongs to the peptidase M3 family. It depends on Zn(2+) as a cofactor.

The protein localises to the cytoplasm. It catalyses the reaction Hydrolysis of unblocked, C-terminal dipeptides from oligopeptides, with broad specificity. Does not hydrolyze bonds in which P1' is Pro, or both P1 and P1' are Gly.. Its function is as follows. Removes dipeptides from the C-termini of N-blocked tripeptides, tetrapeptides and larger peptides. The polypeptide is Dipeptidyl carboxypeptidase (dcp) (Salmonella typhimurium (strain LT2 / SGSC1412 / ATCC 700720)).